The sequence spans 4250 residues: Dynein axonemal heavy chain 1 (4250 aa).

Positions 1–73 (MEECNKEGPS…KSPLTGTDKK (73 aa)) are disordered. The segment at 1–1527 (MEECNKEGPS…YIRAVNAEFI (1527 aa)) is stem. Over residues 24-42 (PESHDLEKILQESNYHPER) the composition is skewed to basic and acidic residues. The span at 46 to 55 (NPDPKTPPLP) shows a compositional bias: pro residues. AAA regions lie at residues 1528-1749 (YGYE…VISA), 1809-2042 (QAIR…NTVK), 2174-2434 (TMMP…VFQG), and 2532-2784 (DYNQ…LARH). A GPAGTGKT motif motif is present at residues 1566–1573 (GPAGTGKT). Residue 1566–1573 (GPAGTGKT) coordinates ATP. Positions 1616–1622 (CFDEFNR) match the CFDEFNR motif motif. ATP-binding positions include 1847–1854 (GPTGSGKS), 2212–2219 (GPTGTGKT), and 2571–2578 (GVGGSGRS). The interval 2799 to 3097 (FSILIGQKKM…EELEMKCEQC (299 aa)) is stalk. A coiled-coil region spans residues 3045 to 3128 (LREAQDDLEV…QETVENLENM (84 aa)). AAA stretches follow at residues 3182 to 3412 (LGNP…EIQA) and 3625 to 3844 (MQDF…QLKM).

Belongs to the dynein heavy chain family. As to quaternary structure, consists of at least two heavy chains and a number of intermediate and light chains.

Its subcellular location is the cytoplasm. The protein localises to the cytoskeleton. The protein resides in the cilium axoneme. It is found in the cell projection. It localises to the cilium. Its subcellular location is the flagellum. Functionally, force generating protein of cilia required for sperm flagellum motility. Produces force towards the minus ends of microtubules. Dynein has ATPase activity; the force-producing power stroke is thought to occur on release of ADP. Required in spermatozoa for the formation of the inner dynein arms and biogenesis of the axoneme. In Mus musculus (Mouse), this protein is Dynein axonemal heavy chain 1.